The chain runs to 561 residues: Chaperonin GroEL 1 (561 aa).

ATP contacts are provided by residues 29–32 (TMGP), 86–90 (DGTTT), glycine 413, and aspartate 495.

It belongs to the chaperonin (HSP60) family. Forms a cylinder of 14 subunits composed of two heptameric rings stacked back-to-back. Interacts with the co-chaperonin GroES.

It is found in the cytoplasm. It catalyses the reaction ATP + H2O + a folded polypeptide = ADP + phosphate + an unfolded polypeptide.. Functionally, together with its co-chaperonin GroES, plays an essential role in assisting protein folding. The GroEL-GroES system forms a nano-cage that allows encapsulation of the non-native substrate proteins and provides a physical environment optimized to promote and accelerate protein folding. This chain is Chaperonin GroEL 1, found in Trichodesmium erythraeum (strain IMS101).